The sequence spans 331 residues: Mucin-15 (331 aa).

Residues 1–22 form the signal peptide; the sequence is MLTLAKIALISSLFISLPFARP. The Extracellular segment spans residues 23–233; it reads QKQNPRRNVT…SDTPKENKNT (211 aa). N30, N44, N54, N59, N75, N84, N120, N136, N145, N152, N215, and N222 each carry an N-linked (GlcNAc...) asparagine glycan. The span at 124–162 shows a compositional bias: polar residues; it reads ADANPLQVSEHSNSTNSPSPENFTWSLDNDTMNSPEDIS. The tract at residues 124 to 186 is disordered; it reads ADANPLQVSE…VTPFTAEPTE (63 aa). Residues 234-254 form a helical membrane-spanning segment; that stretch reads GIVFGAILGAILGASLLSLVG. Over 255–331 the chain is Cytoplasmic; it reads YLLCGQRKTD…DAIPPLRPSI (77 aa). The tract at residues 302–331 is disordered; the sequence is AVSDSSMPEGGESLQDGIPMDAIPPLRPSI.

In terms of processing, highly glycosylated (N- and O-linked carbohydrates).

Its subcellular location is the membrane. This Mus musculus (Mouse) protein is Mucin-15 (Muc15).